The chain runs to 299 residues: Small ribosomal subunit protein uS2 (299 aa).

The tract at residues 227 to 299 is disordered; it reads SERKSEKSTK…DKAKASNEEE (73 aa).

This sequence belongs to the universal ribosomal protein uS2 family.

The protein is Small ribosomal subunit protein uS2 of Christiangramia forsetii (strain DSM 17595 / CGMCC 1.15422 / KT0803) (Gramella forsetii).